A 149-amino-acid chain; its full sequence is Large ribosomal subunit protein bL9 (149 aa).

The protein belongs to the bacterial ribosomal protein bL9 family.

Functionally, binds to the 23S rRNA. The chain is Large ribosomal subunit protein bL9 from Enterobacter sp. (strain 638).